Reading from the N-terminus, the 177-residue chain is MSRIGKKPVELPTGVTASVSGQTIEVKGPKATRSFTATDDVTLKVEDNVITIEPRGKSKRARQQWGMSRTMVGNLVTGVTNGFKKELEIQGVGYRAQMQGNTLKLNLGLSHEVNYEVPAGVTVTCPKVTEIVIEGTDEQLVGQVAANIRDWRKPEPYKGKGIRYKGEFIFRKEGKKK.

This sequence belongs to the universal ribosomal protein uL6 family. Part of the 50S ribosomal subunit.

In terms of biological role, this protein binds to the 23S rRNA, and is important in its secondary structure. It is located near the subunit interface in the base of the L7/L12 stalk, and near the tRNA binding site of the peptidyltransferase center. The protein is Large ribosomal subunit protein uL6 of Dinoroseobacter shibae (strain DSM 16493 / NCIMB 14021 / DFL 12).